We begin with the raw amino-acid sequence, 231 residues long: Phosphatidylserine decarboxylase proenzyme (231 aa).

S188 serves as the catalytic Schiff-base intermediate with substrate; via pyruvic acid. S188 is subject to Pyruvic acid (Ser); by autocatalysis.

It belongs to the phosphatidylserine decarboxylase family. PSD-A subfamily. In terms of assembly, heterodimer of a large membrane-associated beta subunit and a small pyruvoyl-containing alpha subunit. The cofactor is pyruvate. Post-translationally, is synthesized initially as an inactive proenzyme. Formation of the active enzyme involves a self-maturation process in which the active site pyruvoyl group is generated from an internal serine residue via an autocatalytic post-translational modification. Two non-identical subunits are generated from the proenzyme in this reaction, and the pyruvate is formed at the N-terminus of the alpha chain, which is derived from the carboxyl end of the proenzyme. The post-translation cleavage follows an unusual pathway, termed non-hydrolytic serinolysis, in which the side chain hydroxyl group of the serine supplies its oxygen atom to form the C-terminus of the beta chain, while the remainder of the serine residue undergoes an oxidative deamination to produce ammonia and the pyruvoyl prosthetic group on the alpha chain.

Its subcellular location is the cell membrane. The catalysed reaction is a 1,2-diacyl-sn-glycero-3-phospho-L-serine + H(+) = a 1,2-diacyl-sn-glycero-3-phosphoethanolamine + CO2. Its pathway is phospholipid metabolism; phosphatidylethanolamine biosynthesis; phosphatidylethanolamine from CDP-diacylglycerol: step 2/2. Catalyzes the formation of phosphatidylethanolamine (PtdEtn) from phosphatidylserine (PtdSer). The chain is Phosphatidylserine decarboxylase proenzyme from Rickettsia prowazekii (strain Madrid E).